A 48-amino-acid polypeptide reads, in one-letter code: uncharacterized protein (48 aa).

Residues 1–30 form a disordered region; the sequence is MLGRTKLGNRNAQANNNAKKKNGFQTHFDS.

This is an uncharacterized protein from Bacillus subtilis (strain 168).